The chain runs to 745 residues: Serine/threonine-protein kinase GG21441 (745 aa).

The segment at 49-73 is disordered; it reads RNQQQNVQKDFDSHNRDCDSPVSST. A compositionally biased stretch (basic and acidic residues) spans 57 to 67; sequence KDFDSHNRDCD. Doublecortin domains are found at residues 159 to 245 and 315 to 398; these read LRIK…VEYN and RIVT…AEDF. Residues 479 to 737 enclose the Protein kinase domain; that stretch reads YTLGRIIGDG…SEDILDHYWT (259 aa). Residues 485-493 and lysine 508 each bind ATP; that span reads IGDGNFAIV. Residue aspartate 600 is the Proton acceptor of the active site.

It belongs to the protein kinase superfamily. CAMK Ser/Thr protein kinase family. CaMK subfamily.

It catalyses the reaction L-seryl-[protein] + ATP = O-phospho-L-seryl-[protein] + ADP + H(+). The enzyme catalyses L-threonyl-[protein] + ATP = O-phospho-L-threonyl-[protein] + ADP + H(+). The polypeptide is Serine/threonine-protein kinase GG21441 (Drosophila erecta (Fruit fly)).